Reading from the N-terminus, the 200-residue chain is Protein DMP7 (200 aa).

The next 4 membrane-spanning stretches (helical) occupy residues 37–57 (LSNL…PVLT), 69–89 (WLTC…SFTD), 129–149 (ILDF…SMFD), and 167–187 (ILTS…LAFP).

The protein belongs to the plant DMP1 protein family. As to expression, expressed in leaves, stems, flowers, siliques and roots, especially in the vasculature.

It localises to the endoplasmic reticulum membrane. Involved in membrane remodeling. The sequence is that of Protein DMP7 from Arabidopsis thaliana (Mouse-ear cress).